A 274-amino-acid polypeptide reads, in one-letter code: DNA repair protein Rad1 (274 aa).

Belongs to the rad1 family. In terms of assembly, component of the 9-1-1 checkpoint clamp complex consisting of Rad9 isoform A, Rad1 and Hus1-like; the interaction with Hus1-like is direct. Does not interact directly with Rad9; this interaction is probably mediated by Hus1-like. This complex probably also forms with Rad9 isoform B, however 9-1-1 complex containing Rad9 isoform A localizes to the nuclear periphery. Expressed in ovary.

Its subcellular location is the cytoplasm. It is found in the nucleus. It localises to the nucleus envelope. In Drosophila melanogaster (Fruit fly), this protein is DNA repair protein Rad1.